A 505-amino-acid polypeptide reads, in one-letter code: ATP synthase subunit alpha (505 aa).

169-176 (GDRQIGKT) provides a ligand contact to ATP.

Belongs to the ATPase alpha/beta chains family. In terms of assembly, F-type ATPases have 2 components, CF(1) - the catalytic core - and CF(0) - the membrane proton channel. CF(1) has five subunits: alpha(3), beta(3), gamma(1), delta(1), epsilon(1). CF(0) has three main subunits: a(1), b(2) and c(9-12). The alpha and beta chains form an alternating ring which encloses part of the gamma chain. CF(1) is attached to CF(0) by a central stalk formed by the gamma and epsilon chains, while a peripheral stalk is formed by the delta and b chains.

The protein resides in the cell inner membrane. It catalyses the reaction ATP + H2O + 4 H(+)(in) = ADP + phosphate + 5 H(+)(out). Produces ATP from ADP in the presence of a proton gradient across the membrane. The alpha chain is a regulatory subunit. This is ATP synthase subunit alpha from Desulfosudis oleivorans (strain DSM 6200 / JCM 39069 / Hxd3) (Desulfococcus oleovorans).